Here is a 391-residue protein sequence, read N- to C-terminus: Succinyl-diaminopimelate desuccinylase (391 aa).

H67 is a Zn(2+) binding site. The active site involves D69. D101 contributes to the Zn(2+) binding site. The active-site Proton acceptor is E135. Residues E136, E164, and H353 each contribute to the Zn(2+) site.

It belongs to the peptidase M20A family. DapE subfamily. In terms of assembly, homodimer. The cofactor is Zn(2+). Co(2+) serves as cofactor.

The enzyme catalyses N-succinyl-(2S,6S)-2,6-diaminopimelate + H2O = (2S,6S)-2,6-diaminopimelate + succinate. It functions in the pathway amino-acid biosynthesis; L-lysine biosynthesis via DAP pathway; LL-2,6-diaminopimelate from (S)-tetrahydrodipicolinate (succinylase route): step 3/3. Its function is as follows. Catalyzes the hydrolysis of N-succinyl-L,L-diaminopimelic acid (SDAP), forming succinate and LL-2,6-diaminopimelate (DAP), an intermediate involved in the bacterial biosynthesis of lysine and meso-diaminopimelic acid, an essential component of bacterial cell walls. This chain is Succinyl-diaminopimelate desuccinylase, found in Rickettsia bellii (strain RML369-C).